The chain runs to 677 residues: Secretogranin-1 (677 aa).

The N-terminal stretch at 1-20 is a signal peptide; the sequence is MQPTLLLSLLGAVGLAAVNS. A disulfide bridge connects residues Cys36 and Cys57. 2 stretches are compositionally biased toward basic and acidic residues: residues 64-100 and 118-136; these read SRKD…ESSS and ADTE…RADE. The tract at residues 64–463 is disordered; the sequence is SRKDVKDKET…DKARRHPQGA (400 aa). At Thr79 the chain carries Phosphothreonine. Phosphoserine is present on residues Ser93, Ser99, and Ser100. Ser93 carries O-linked (Xyl...) (chondroitin sulfate) serine glycosylation. The interval 116–120 is O-glycosylated at one site; that stretch reads TKADT. Ser130 is modified (phosphoserine; by FAM20C). Ser149 carries the post-translational modification Phosphoserine. Composition is skewed to basic and acidic residues over residues 150 to 162, 172 to 190, and 200 to 236; these read EEVK…KSQR, NYQK…HLEE, and NERK…EKSS. The residue at position 183 (Ser183) is a Phosphoserine. Phosphoserine; by FAM20C is present on Ser225. Residue Ser239 is glycosylated (O-linked (Xyl...) (chondroitin sulfate) serine). 2 positions are modified to phosphoserine: Ser259 and Ser263. Acidic residues predominate over residues 262–272; the sequence is ESEEGEEDATS. The span at 277–287 shows a compositional bias: basic residues; the sequence is RRTRPRHHHGR. 4 positions are modified to phosphoserine: Ser293, Ser294, Ser311, and Ser335. Tyr341 bears the Sulfotyrosine mark. Over residues 359-372 the composition is skewed to basic and acidic residues; it reads WERYRGRGSEEYRA. 3 positions are modified to phosphoserine; by FAM20C: Ser367, Ser377, and Ser380. Composition is skewed to basic and acidic residues over residues 384–415 and 433–455; these read EDKR…EPGK and DTRE…QMDK. Phosphotyrosine is present on Tyr401. Ser405 bears the Phosphoserine mark. A Sulfotyrosine modification is found at Tyr474. Residues 475–512 are disordered; the sequence is GEEGAPGKWQQQGDLQDTKENREEARFQDKQYSSHHTA. A compositionally biased stretch (basic and acidic residues) spans 490-503; that stretch reads QDTKENREEARFQD. 2 positions are modified to phosphoserine: Ser533 and Ser534. Tyr566 is subject to Sulfotyrosine. Ser617 is subject to Phosphoserine. The interval 622–653 is disordered; sequence DFYDSEEPVSTHQEAENEKDRADQTVLTEDEK. A Sulfotyrosine modification is found at Tyr624. Phosphoserine occurs at positions 626 and 631. The span at 634-653 shows a compositional bias: basic and acidic residues; sequence QEAENEKDRADQTVLTEDEK.

This sequence belongs to the chromogranin/secretogranin protein family. As to quaternary structure, interacts with ITPR1 in the secretory granules. Extensively processed by limited proteolysis at conserved basic residues. Alternative processing are seen in different tissues. In terms of processing, O-glycosylated. In terms of tissue distribution, detected in cerebrospinal fluid and urine (at protein level). Expressed in the adrenal medulla, and in pheochromocytoma. Not expressed in liver.

Its subcellular location is the secreted. Secretogranin-1 is a neuroendocrine secretory granule protein, which may be the precursor for other biologically active peptides. This chain is Secretogranin-1 (CHGB), found in Homo sapiens (Human).